The sequence spans 622 residues: Telomerase-associated protein of 75 kDa (622 aa).

In terms of assembly, component of the telomerase holoenzyme complex, composed of the catalytic core (the catalytic subunit TERT, the telomerase RNA template component TER and TAP65/p65), which is associated with two heterotrimeric subcomplexes: (i) the replication protein A (RPA)-related subcomplex, composed of TEB1, RPA2/TEB2 and RPA3/TEB3 and (ii) the CST-like subcomplex, composed of TAP75/p75, TAP45/p45 and TAP19/p19. TEB1 and the CST-like subcomplex are tethered to the catalytic core by TAP50/p50.

It is found in the chromosome. It localises to the telomere. Its function is as follows. Component of a CST-like subcomplex of the holoenzyme telomerase ribonucleoprotein complex, which stimulates telomerase complementary-strand synthesis. Telomerase is an essential ribonucleoprotein enzyme that copies new telomeric repeats onto chromosome ends by repetitively synthesizing the short telomere-repeat sequence 5'-TTGGGG-3' using an RNA template component TER. The CST-like subcomplex (also named 7-4-1) binds telomeric single-stranded DNA and coordinates telomere G-strand and C-strand synthesis. The chain is Telomerase-associated protein of 75 kDa from Tetrahymena thermophila (strain SB210).